The chain runs to 261 residues: Transcription factor BEE 3 (261 aa).

The span at 72–82 (NIQNNEESSSQ) shows a compositional bias: low complexity. Disordered stretches follow at residues 72-158 (NIQN…TDSH) and 242-261 (VEMG…SWTL). The segment covering 95-123 (VSTSENSVSDQTLSTSSAQVSINGNISTK) has biased composition (polar residues). Residues 135-146 (NREEEKEREVVH) are compositionally biased toward basic and acidic residues. The bHLH domain occupies 153-203 (QATDSHSIAERVRRGKINERLKCLQDIVPGCYKTMGMATMLDEIINYVQSL).

Homodimer. In terms of tissue distribution, expressed in stems.

The protein localises to the nucleus. Its function is as follows. Positive regulator of brassinosteroid signaling. The chain is Transcription factor BEE 3 (BEE3) from Arabidopsis thaliana (Mouse-ear cress).